The chain runs to 339 residues: Glycerol-3-phosphate dehydrogenase [NAD(P)+] (339 aa).

The NADPH site is built by Ser14, Tyr15, His35, and Lys109. Sn-glycerol 3-phosphate contacts are provided by Lys109, Gly138, and Thr140. Ala142 contacts NADPH. The sn-glycerol 3-phosphate site is built by Lys194, Asp247, Ser257, Arg258, and Asn259. Lys194 serves as the catalytic Proton acceptor. Arg258 contacts NADPH. NADPH is bound by residues Val282 and Glu284.

The protein belongs to the NAD-dependent glycerol-3-phosphate dehydrogenase family.

The protein localises to the cytoplasm. The catalysed reaction is sn-glycerol 3-phosphate + NAD(+) = dihydroxyacetone phosphate + NADH + H(+). It carries out the reaction sn-glycerol 3-phosphate + NADP(+) = dihydroxyacetone phosphate + NADPH + H(+). Its pathway is membrane lipid metabolism; glycerophospholipid metabolism. Functionally, catalyzes the reduction of the glycolytic intermediate dihydroxyacetone phosphate (DHAP) to sn-glycerol 3-phosphate (G3P), the key precursor for phospholipid synthesis. The polypeptide is Glycerol-3-phosphate dehydrogenase [NAD(P)+] (Shewanella halifaxensis (strain HAW-EB4)).